The chain runs to 463 residues: Perilipin-5 (463 aa).

The tract at residues 1 to 108 (MSEEEAAQIP…KLEEKLPFLQ (108 aa)) is interaction with LIPE. The segment at 1–173 (MSEEEAAQIP…HFLPMTEEEL (173 aa)) is essential for lipid droplet targeting. S2, S148, and S322 each carry phosphoserine. Residues 185 to 463 (VGSVEDQRRQ…KHTLMPELDF (279 aa)) are interaction with PNPLA2 and ABHD5. The tract at residues 444-463 (QEPETPSCPVKHTLMPELDF) is recruits mitochondria at the lipid droplet surface.

Belongs to the perilipin family. Homooligomer. Interacts with PNPLA2; prevents interaction of PNPLA2 with ABHD5. Interacts with ABHD5; targets ABHD5 to lipid droplets and promotes interaction of ABHD5 with PNPLA2. Interacts with LIPE. Post-translationally, phosphorylated by PKA. Phosphorylated on serine in skeletal muscle at rest or upon lipolytic stimulation. Expressed in skeletal muscle, liver, heart and kidney.

Its subcellular location is the lipid droplet. It localises to the cytoplasm. The protein resides in the mitochondrion. Functionally, lipid droplet-associated protein that maintains the balance between lipogenesis and lipolysis and also regulates fatty acid oxidation in oxidative tissues. Recruits mitochondria to the surface of lipid droplets and is involved in lipid droplet homeostasis by regulating both the storage of fatty acids in the form of triglycerides and the release of fatty acids for mitochondrial fatty acid oxidation. In lipid droplet triacylglycerol hydrolysis, plays a role as a scaffolding protein for three major key lipolytic players: ABHD5, PNPLA2 and LIPE. Reduces the triacylglycerol hydrolase activity of PNPLA2 by recruiting and sequestering PNPLA2 to lipid droplets. Phosphorylation by PKA enables lipolysis probably by promoting release of ABHD5 from the perilipin scaffold and by facilitating interaction of ABHD5 with PNPLA2. Also increases lipolysis through interaction with LIPE and upon PKA-mediated phosphorylation of LIPE. This chain is Perilipin-5 (PLIN5), found in Homo sapiens (Human).